The primary structure comprises 331 residues: FMRFamide-related neuropeptides (331 aa).

Residues 1 to 25 (MRCWSPCSLLVVIVIYCLSSHTSEA) form the signal peptide. The propeptide occupies 26 to 65 (FDLAQACVESQRLSLLPICDTIFAVQQEGAQQSADDGMRS). Phe-71 and Phe-83 each carry phenylalanine amide. Residues 86-94 (NVPDLPFED) constitute a propeptide that is removed on maturation. Phe-100 is modified (phenylalanine amide). Positions 103–168 (AAPQLDDLLK…YIDDVEDSDV (66 aa)) are excised as a propeptide. The segment at 122-158 (QKADETSVRRKRSTDAAPQNNAENPEQKNDSAKITKR) is disordered. The segment covering 146–158 (PEQKNDSAKITKR) has biased composition (basic and acidic residues). A phenylalanine amide mark is found at Phe-174 and Phe-181. The propeptide occupies 184-194 (NPSDAGNKLTE). Residue Phe-200 is modified to Phenylalanine amide. A propeptide spanning residues 203 to 205 (DPE) is cleaved from the precursor. At Phe-211 the chain carries Phenylalanine amide. Positions 214-216 (SDD) are excised as a propeptide. Phenylalanine amide is present on Phe-222. The propeptide occupies 225–236 (NPSDVEDELEED). Phenylalanine amide is present on Phe-242. A propeptide spanning residues 245–254 (GGEDDEEEAE) is cleaved from the precursor. Phe-260 is modified (phenylalanine amide). Positions 263–265 (DPE) are excised as a propeptide. Phe-271 is subject to Phenylalanine amide. Residues 274-277 (SGED) constitute a propeptide that is removed on maturation. Over residues 282–296 (RFGRNPDEQEADKRF) the composition is skewed to basic and acidic residues. Positions 282–310 (RFGRNPDEQEADKRFMRFGRGGEDDEVST) are disordered. Phe-283 bears the Phenylalanine amide mark. Positions 286 to 293 (NPDEQEAD) are excised as a propeptide. Phe-299 is subject to Phenylalanine amide. Residues 302 to 312 (GGEDDEVSTED) constitute a propeptide that is removed on maturation. Phenylalanine amide is present on Phe-318. A propeptide spanning residues 321–331 (SADKCKGCLEG) is cleaved from the precursor.

It belongs to the FARP (FMRFamide related peptide) family.

Its subcellular location is the secreted. Its function is as follows. Excitatory neurotransmitters that directly modulate chromatophore function by activating chromatophore expansion at the chromatophore neuromuscular junction. The sequence is that of FMRFamide-related neuropeptides from Doryteuthis pealeii (Longfin inshore squid).